The sequence spans 377 residues: Succinyl-diaminopimelate desuccinylase (377 aa).

Histidine 68 contacts Zn(2+). Aspartate 70 is a catalytic residue. Aspartate 101 contributes to the Zn(2+) binding site. The active-site Proton acceptor is glutamate 135. The Zn(2+) site is built by glutamate 136, glutamate 164, and histidine 350.

The protein belongs to the peptidase M20A family. DapE subfamily. As to quaternary structure, homodimer. Zn(2+) serves as cofactor. Requires Co(2+) as cofactor.

It carries out the reaction N-succinyl-(2S,6S)-2,6-diaminopimelate + H2O = (2S,6S)-2,6-diaminopimelate + succinate. The protein operates within amino-acid biosynthesis; L-lysine biosynthesis via DAP pathway; LL-2,6-diaminopimelate from (S)-tetrahydrodipicolinate (succinylase route): step 3/3. Catalyzes the hydrolysis of N-succinyl-L,L-diaminopimelic acid (SDAP), forming succinate and LL-2,6-diaminopimelate (DAP), an intermediate involved in the bacterial biosynthesis of lysine and meso-diaminopimelic acid, an essential component of bacterial cell walls. The chain is Succinyl-diaminopimelate desuccinylase from Psychromonas ingrahamii (strain DSM 17664 / CCUG 51855 / 37).